A 585-amino-acid chain; its full sequence is ADP-ribosylation factor-binding protein GGA2 (585 aa).

The VHS domain maps to 33–169 (ACRMSLAEPD…LLKYKGYAFP (137 aa)). Residues Lys-180 and Lys-287 each participate in a glycyl lysine isopeptide (Lys-Gly) (interchain with G-Cter in ubiquitin) cross-link. Residues 196-321 (EIAQAAKLEE…LLEKFNLLKN (126 aa)) form the GAT domain. The tract at residues 358 to 378 (LDEAPSQGNNNTNGTGTPAAA) is disordered. Residues 365-374 (GNNNTNGTGT) show a composition bias toward low complexity. The GAE domain maps to 466–581 (TTTAPARTLV…TQAEETAVFT (116 aa)).

Binds to ARF1 and ARF2.

The protein resides in the golgi apparatus. The protein localises to the trans-Golgi network. In terms of biological role, may play a role in the regulation of membrane traffic through the trans-Golgi network. This is ADP-ribosylation factor-binding protein GGA2 (GGA2) from Saccharomyces cerevisiae (strain ATCC 204508 / S288c) (Baker's yeast).